An 876-amino-acid polypeptide reads, in one-letter code: Alanine--tRNA ligase (876 aa).

Residue Lys-74 is modified to N6-acetyllysine. Positions 564, 568, 666, and 670 each coordinate Zn(2+).

Belongs to the class-II aminoacyl-tRNA synthetase family. In terms of assembly, homotetramer. The cofactor is Zn(2+).

Its subcellular location is the cytoplasm. The catalysed reaction is tRNA(Ala) + L-alanine + ATP = L-alanyl-tRNA(Ala) + AMP + diphosphate. Its function is as follows. Catalyzes the attachment of alanine to tRNA(Ala) in a two-step reaction: alanine is first activated by ATP to form Ala-AMP and then transferred to the acceptor end of tRNA(Ala). Also edits incorrectly charged Ser-tRNA(Ala) and Gly-tRNA(Ala) via its editing domain. The protein is Alanine--tRNA ligase of Escherichia coli O157:H7.